Reading from the N-terminus, the 256-residue chain is 2-C-methyl-D-erythritol 4-phosphate cytidylyltransferase (256 aa).

It belongs to the IspD/TarI cytidylyltransferase family. IspD subfamily.

The catalysed reaction is 2-C-methyl-D-erythritol 4-phosphate + CTP + H(+) = 4-CDP-2-C-methyl-D-erythritol + diphosphate. It functions in the pathway isoprenoid biosynthesis; isopentenyl diphosphate biosynthesis via DXP pathway; isopentenyl diphosphate from 1-deoxy-D-xylulose 5-phosphate: step 2/6. Its function is as follows. Catalyzes the formation of 4-diphosphocytidyl-2-C-methyl-D-erythritol from CTP and 2-C-methyl-D-erythritol 4-phosphate (MEP). The sequence is that of 2-C-methyl-D-erythritol 4-phosphate cytidylyltransferase from Corynebacterium glutamicum (strain ATCC 13032 / DSM 20300 / JCM 1318 / BCRC 11384 / CCUG 27702 / LMG 3730 / NBRC 12168 / NCIMB 10025 / NRRL B-2784 / 534).